A 500-amino-acid chain; its full sequence is Probable glycine dehydrogenase (decarboxylating) subunit 2 (500 aa).

K273 is modified (N6-(pyridoxal phosphate)lysine).

Belongs to the GcvP family. C-terminal subunit subfamily. As to quaternary structure, the glycine cleavage system is composed of four proteins: P, T, L and H. In this organism, the P 'protein' is a heterodimer of two subunits. It depends on pyridoxal 5'-phosphate as a cofactor.

It carries out the reaction N(6)-[(R)-lipoyl]-L-lysyl-[glycine-cleavage complex H protein] + glycine + H(+) = N(6)-[(R)-S(8)-aminomethyldihydrolipoyl]-L-lysyl-[glycine-cleavage complex H protein] + CO2. The glycine cleavage system catalyzes the degradation of glycine. The P protein binds the alpha-amino group of glycine through its pyridoxal phosphate cofactor; CO(2) is released and the remaining methylamine moiety is then transferred to the lipoamide cofactor of the H protein. This is Probable glycine dehydrogenase (decarboxylating) subunit 2 from Rhodopirellula baltica (strain DSM 10527 / NCIMB 13988 / SH1).